The chain runs to 246 residues: Flagellar L-ring protein (246 aa).

A signal peptide spans 1-20; sequence MMQKCLSPKTLIAALVVLSA. Residue Cys21 is the site of N-palmitoyl cysteine attachment. Cys21 carries S-diacylglycerol cysteine lipidation.

This sequence belongs to the FlgH family. In terms of assembly, the basal body constitutes a major portion of the flagellar organelle and consists of four rings (L,P,S, and M) mounted on a central rod.

The protein resides in the cell outer membrane. It is found in the bacterial flagellum basal body. In terms of biological role, assembles around the rod to form the L-ring and probably protects the motor/basal body from shearing forces during rotation. In Ruegeria pomeroyi (strain ATCC 700808 / DSM 15171 / DSS-3) (Silicibacter pomeroyi), this protein is Flagellar L-ring protein.